A 316-amino-acid chain; its full sequence is Protoheme IX farnesyltransferase (316 aa).

Transmembrane regions (helical) follow at residues 28–48 (WLAL…AAGM), 57–77 (IPIG…AGAI), 106–126 (AALV…WLAT), 129–149 (LAAD…TMWL), 156–176 (NIVI…AATM), 179–199 (MAVL…PHFW), 230–250 (ILIY…VHEV), 254–274 (YTVV…RVLM), and 296–316 (YSLV…VLIG).

It belongs to the UbiA prenyltransferase family. Protoheme IX farnesyltransferase subfamily.

It is found in the cell inner membrane. The catalysed reaction is heme b + (2E,6E)-farnesyl diphosphate + H2O = Fe(II)-heme o + diphosphate. Its pathway is porphyrin-containing compound metabolism; heme O biosynthesis; heme O from protoheme: step 1/1. Functionally, converts heme B (protoheme IX) to heme O by substitution of the vinyl group on carbon 2 of heme B porphyrin ring with a hydroxyethyl farnesyl side group. This chain is Protoheme IX farnesyltransferase, found in Gluconobacter oxydans (strain 621H) (Gluconobacter suboxydans).